Consider the following 471-residue polypeptide: Pneumolysin (471 aa).

A run of 4 beta stranded transmembrane segments spans residues 158–171 (MEQL…DFEK), 178–187 (IDFNSVHSGE), 256–265 (SDEVEAAFEA), and 273–285 (APQT…LDNT). Residues 427–437 (ECTGLAWEWWR) carry the Conserved undecapeptide motif. Positions 459-460 (TL) match the Cholesterol binding motif.

It belongs to the cholesterol-dependent cytolysin family. Homooligomeric pore complex of 35 to 50 subunits; when inserted in the host membrane. Post-translationally, has a slightly altered apparent molecular weight in a secA2 deletion mutant, but no post-translational modifications have been found.

It localises to the secreted. The protein localises to the cell wall. Its subcellular location is the host cell membrane. Functionally, a cholesterol-dependent toxin that causes cytolysis by forming pores in cholesterol containing host membranes. After binding to target membranes, the protein undergoes a major conformation change, leading to its insertion in the host membrane and formation of an oligomeric pore complex. Cholesterol is required for binding to host membranes, membrane insertion and pore formation; cholesterol binding is mediated by a Thr-Leu pair in the C-terminus. Can be reversibly inactivated by oxidation. The chain is Pneumolysin (ply) from Streptococcus pneumoniae serotype 4 (strain ATCC BAA-334 / TIGR4).